Reading from the N-terminus, the 235-residue chain is Adapter protein MecA (235 aa).

The span at 113-135 shows a compositional bias: basic and acidic residues; that stretch reads LRQSDKGDIVKSKVSSSDHKDGS. The disordered stretch occupies residues 113-136; that stretch reads LRQSDKGDIVKSKVSSSDHKDGSQ.

It belongs to the MecA family. Homodimer.

In terms of biological role, enables the recognition and targeting of unfolded and aggregated proteins to the ClpC protease or to other proteins involved in proteolysis. The sequence is that of Adapter protein MecA from Leuconostoc mesenteroides subsp. mesenteroides (strain ATCC 8293 / DSM 20343 / BCRC 11652 / CCM 1803 / JCM 6124 / NCDO 523 / NBRC 100496 / NCIMB 8023 / NCTC 12954 / NRRL B-1118 / 37Y).